Consider the following 200-residue polypeptide: Ankyrin repeat-containing protein YAR1 (200 aa).

ANK repeat units lie at residues 49 to 78 (SDST…RANS) and 92 to 121 (TGNT…ADPF). Position 78 is a phosphoserine (serine 78). The segment at 152 to 173 (VEPEDDEEDTQTEGKNSVQITK) is disordered. Residues 153-162 (EPEDDEEDTQ) are compositionally biased toward acidic residues. The segment covering 164 to 173 (EGKNSVQITK) has biased composition (polar residues).

Functionally, required for normal rate of cell proliferation. In Saccharomyces cerevisiae (strain ATCC 204508 / S288c) (Baker's yeast), this protein is Ankyrin repeat-containing protein YAR1 (YAR1).